The following is a 240-amino-acid chain: Protein GrpE (240 aa).

Disordered stretches follow at residues 1–54 (MSGD…NEAR) and 206–240 (VSMGPGPQDGASSQPAEAPAADAPAEDSGSGDGNG). A compositionally biased stretch (low complexity) spans 215 to 233 (GASSQPAEAPAADAPAEDS).

It belongs to the GrpE family. As to quaternary structure, homodimer.

Its subcellular location is the cytoplasm. Participates actively in the response to hyperosmotic and heat shock by preventing the aggregation of stress-denatured proteins, in association with DnaK and GrpE. It is the nucleotide exchange factor for DnaK and may function as a thermosensor. Unfolded proteins bind initially to DnaJ; upon interaction with the DnaJ-bound protein, DnaK hydrolyzes its bound ATP, resulting in the formation of a stable complex. GrpE releases ADP from DnaK; ATP binding to DnaK triggers the release of the substrate protein, thus completing the reaction cycle. Several rounds of ATP-dependent interactions between DnaJ, DnaK and GrpE are required for fully efficient folding. This Synechococcus sp. (strain WH7803) protein is Protein GrpE.